A 354-amino-acid polypeptide reads, in one-letter code: UPF0425 pyridoxal phosphate-dependent protein MMP0002 (354 aa).

Position 210 is an N6-(pyridoxal phosphate)lysine (Lys-210).

This sequence belongs to the UPF0425 family. Requires pyridoxal 5'-phosphate as cofactor.

This Methanococcus maripaludis (strain DSM 14266 / JCM 13030 / NBRC 101832 / S2 / LL) protein is UPF0425 pyridoxal phosphate-dependent protein MMP0002.